A 502-amino-acid chain; its full sequence is Probable cytosol aminopeptidase (502 aa).

The Mn(2+) site is built by lysine 265 and aspartate 270. Residue lysine 277 is part of the active site. Aspartate 288, aspartate 347, and glutamate 349 together coordinate Mn(2+). Residue arginine 351 is part of the active site.

The protein belongs to the peptidase M17 family. Mn(2+) is required as a cofactor.

Its subcellular location is the cytoplasm. The enzyme catalyses Release of an N-terminal amino acid, Xaa-|-Yaa-, in which Xaa is preferably Leu, but may be other amino acids including Pro although not Arg or Lys, and Yaa may be Pro. Amino acid amides and methyl esters are also readily hydrolyzed, but rates on arylamides are exceedingly low.. It carries out the reaction Release of an N-terminal amino acid, preferentially leucine, but not glutamic or aspartic acids.. Presumably involved in the processing and regular turnover of intracellular proteins. Catalyzes the removal of unsubstituted N-terminal amino acids from various peptides. This chain is Probable cytosol aminopeptidase, found in Rickettsia bellii (strain RML369-C).